Consider the following 673-residue polypeptide: UvrABC system protein B (673 aa).

Residues 26-183 enclose the Helicase ATP-binding domain; that stretch reads EGLEDGLAHQ…RRLAELQYTR (158 aa). 39–46 lines the ATP pocket; it reads GVTGSGKT. The Beta-hairpin motif lies at 92 to 115; the sequence is YYDYYQPEAYVPSSDTFIEKDASV. In terms of domain architecture, Helicase C-terminal spans 431 to 597; the sequence is QVDDLLSEIR…GLNKKVVDIL (167 aa). Residues 633-668 form the UVR domain; the sequence is QQKIHELEGQMMQHAQNLEFEEAAQIRDQLHQLREL.

The protein belongs to the UvrB family. Forms a heterotetramer with UvrA during the search for lesions. Interacts with UvrC in an incision complex.

Its subcellular location is the cytoplasm. The UvrABC repair system catalyzes the recognition and processing of DNA lesions. A damage recognition complex composed of 2 UvrA and 2 UvrB subunits scans DNA for abnormalities. Upon binding of the UvrA(2)B(2) complex to a putative damaged site, the DNA wraps around one UvrB monomer. DNA wrap is dependent on ATP binding by UvrB and probably causes local melting of the DNA helix, facilitating insertion of UvrB beta-hairpin between the DNA strands. Then UvrB probes one DNA strand for the presence of a lesion. If a lesion is found the UvrA subunits dissociate and the UvrB-DNA preincision complex is formed. This complex is subsequently bound by UvrC and the second UvrB is released. If no lesion is found, the DNA wraps around the other UvrB subunit that will check the other stand for damage. The chain is UvrABC system protein B from Klebsiella pneumoniae subsp. pneumoniae (strain ATCC 700721 / MGH 78578).